The sequence spans 93 residues: Small ribosomal subunit protein uS17 (93 aa).

The protein belongs to the universal ribosomal protein uS17 family. In terms of assembly, part of the 30S ribosomal subunit.

Its function is as follows. One of the primary rRNA binding proteins, it binds specifically to the 5'-end of 16S ribosomal RNA. The chain is Small ribosomal subunit protein uS17 from Rhodococcus jostii (strain RHA1).